Here is a 419-residue protein sequence, read N- to C-terminus: MNIFDELKARGLVFQTTDEAALSKALTEDMVSYYVGYDPTADSLHLGNLVLILTMKRLQMAGHKPYALVGGATGLIGDPSFKDSERSLQTKDTVTKWSGKIRSQLERFLDFENGENKAEMTNNYNWFENLTFIDFLRDVGKHFTVNYMISKDSVKSRMESGISYTEFAYQIMQGYDFYELNQLHNVTLQLGGSDQWGNMTAGTELLRRKANKQGHVITIPLITDSTGKKFGKSEGNAIWLDADKTSPYEMYQFWLNVDDADAVKMLKIFTFLSLEEIAEIEEQFEAARHERLAQKVLAREVVSLVHGKEAYEQAVKTSEILFGGGDLRQLDAKSILTGLKAAPQHQIAPDEDLTLIELLISAGIAPSKRQAREDITNGAIYINGERVQELDYVLTDSDKIENRLTVIRRGKKKNFVLTY.

Y34 provides a ligand contact to L-tyrosine. Residues 39–48 carry the 'HIGH' region motif; that stretch reads PTADSLHLGN. L-tyrosine is bound by residues Y169 and Q173. The 'KMSKS' region motif lies at 229-233; it reads KFGKS. K232 contributes to the ATP binding site. Residues 353–419 form the S4 RNA-binding domain; sequence LTLIELLISA…GKKKNFVLTY (67 aa).

This sequence belongs to the class-I aminoacyl-tRNA synthetase family. TyrS type 1 subfamily. As to quaternary structure, homodimer.

Its subcellular location is the cytoplasm. The enzyme catalyses tRNA(Tyr) + L-tyrosine + ATP = L-tyrosyl-tRNA(Tyr) + AMP + diphosphate + H(+). Functionally, catalyzes the attachment of tyrosine to tRNA(Tyr) in a two-step reaction: tyrosine is first activated by ATP to form Tyr-AMP and then transferred to the acceptor end of tRNA(Tyr). In Lactococcus lactis subsp. cremoris (strain SK11), this protein is Tyrosine--tRNA ligase.